Consider the following 184-residue polypeptide: ATP synthase subunit b (184 aa).

Residues 16–36 traverse the membrane as a helical segment; that stretch reads LIPPIPELVIGLIAFVIVFGF.

Belongs to the ATPase B chain family. F-type ATPases have 2 components, F(1) - the catalytic core - and F(0) - the membrane proton channel. F(1) has five subunits: alpha(3), beta(3), gamma(1), delta(1), epsilon(1). F(0) has three main subunits: a(1), b(2) and c(10-14). The alpha and beta chains form an alternating ring which encloses part of the gamma chain. F(1) is attached to F(0) by a central stalk formed by the gamma and epsilon chains, while a peripheral stalk is formed by the delta and b chains.

The protein localises to the cell membrane. F(1)F(0) ATP synthase produces ATP from ADP in the presence of a proton or sodium gradient. F-type ATPases consist of two structural domains, F(1) containing the extramembraneous catalytic core and F(0) containing the membrane proton channel, linked together by a central stalk and a peripheral stalk. During catalysis, ATP synthesis in the catalytic domain of F(1) is coupled via a rotary mechanism of the central stalk subunits to proton translocation. Its function is as follows. Component of the F(0) channel, it forms part of the peripheral stalk, linking F(1) to F(0). In Streptomyces coelicolor (strain ATCC BAA-471 / A3(2) / M145), this protein is ATP synthase subunit b.